A 320-amino-acid polypeptide reads, in one-letter code: o-succinylbenzoate synthase (320 aa).

The Proton donor role is filled by K133. Mg(2+)-binding residues include D161, E190, and D213. K235 functions as the Proton acceptor in the catalytic mechanism.

It belongs to the mandelate racemase/muconate lactonizing enzyme family. MenC type 1 subfamily. A divalent metal cation is required as a cofactor.

It carries out the reaction (1R,6R)-6-hydroxy-2-succinyl-cyclohexa-2,4-diene-1-carboxylate = 2-succinylbenzoate + H2O. It participates in quinol/quinone metabolism; 1,4-dihydroxy-2-naphthoate biosynthesis; 1,4-dihydroxy-2-naphthoate from chorismate: step 4/7. Its pathway is quinol/quinone metabolism; menaquinone biosynthesis. In terms of biological role, converts 2-succinyl-6-hydroxy-2,4-cyclohexadiene-1-carboxylate (SHCHC) to 2-succinylbenzoate (OSB). The polypeptide is o-succinylbenzoate synthase (Shigella boydii serotype 18 (strain CDC 3083-94 / BS512)).